An 85-amino-acid polypeptide reads, in one-letter code: UPF0335 protein Plav_2034 (85 aa).

It belongs to the UPF0335 family.

This Parvibaculum lavamentivorans (strain DS-1 / DSM 13023 / NCIMB 13966) protein is UPF0335 protein Plav_2034.